A 366-amino-acid polypeptide reads, in one-letter code: DNA polymerase IV (366 aa).

Positions 6 to 197 (IIHVDMDYFY…LKVSKLWGIG (192 aa)) constitute a UmuC domain. Positions 10 and 114 each coordinate Mg(2+). Residue Glu-115 is part of the active site.

The protein belongs to the DNA polymerase type-Y family. Monomer. The cofactor is Mg(2+).

It is found in the cytoplasm. The enzyme catalyses DNA(n) + a 2'-deoxyribonucleoside 5'-triphosphate = DNA(n+1) + diphosphate. Its function is as follows. Poorly processive, error-prone DNA polymerase involved in untargeted mutagenesis. Copies undamaged DNA at stalled replication forks, which arise in vivo from mismatched or misaligned primer ends. These misaligned primers can be extended by PolIV. Exhibits no 3'-5' exonuclease (proofreading) activity. May be involved in translesional synthesis. This chain is DNA polymerase IV, found in Methanosarcina acetivorans (strain ATCC 35395 / DSM 2834 / JCM 12185 / C2A).